A 128-amino-acid polypeptide reads, in one-letter code: Ribonuclease P protein component (128 aa).

This sequence belongs to the RnpA family. As to quaternary structure, consists of a catalytic RNA component (M1 or rnpB) and a protein subunit.

The enzyme catalyses Endonucleolytic cleavage of RNA, removing 5'-extranucleotides from tRNA precursor.. In terms of biological role, RNaseP catalyzes the removal of the 5'-leader sequence from pre-tRNA to produce the mature 5'-terminus. It can also cleave other RNA substrates such as 4.5S RNA. The protein component plays an auxiliary but essential role in vivo by binding to the 5'-leader sequence and broadening the substrate specificity of the ribozyme. This is Ribonuclease P protein component from Prochlorococcus marinus (strain MIT 9303).